Consider the following 318-residue polypeptide: Thymidylate synthase (318 aa).

DUMP-binding positions include Arg25 and 180-181 (RR). Cys200 (nucleophile) is an active-site residue. DUMP-binding positions include 220–223 (RSAD), Asn231, and 261–263 (HIY). Residue Asp223 coordinates (6R)-5,10-methylene-5,6,7,8-tetrahydrofolate. Ala317 serves as a coordination point for (6R)-5,10-methylene-5,6,7,8-tetrahydrofolate.

The protein belongs to the thymidylate synthase family. Bacterial-type ThyA subfamily. In terms of assembly, homodimer.

It localises to the cytoplasm. The catalysed reaction is dUMP + (6R)-5,10-methylene-5,6,7,8-tetrahydrofolate = 7,8-dihydrofolate + dTMP. It participates in pyrimidine metabolism; dTTP biosynthesis. In terms of biological role, catalyzes the reductive methylation of 2'-deoxyuridine-5'-monophosphate (dUMP) to 2'-deoxythymidine-5'-monophosphate (dTMP) while utilizing 5,10-methylenetetrahydrofolate (mTHF) as the methyl donor and reductant in the reaction, yielding dihydrofolate (DHF) as a by-product. This enzymatic reaction provides an intracellular de novo source of dTMP, an essential precursor for DNA biosynthesis. This is Thymidylate synthase from Ligilactobacillus salivarius (strain UCC118) (Lactobacillus salivarius).